Here is a 513-residue protein sequence, read N- to C-terminus: Bifunctional purine biosynthesis protein PurH (513 aa).

The region spanning 1-146 (MPRFALLSVS…KNHAHLTILT (146 aa)) is the MGS-like domain.

It belongs to the PurH family.

The catalysed reaction is (6R)-10-formyltetrahydrofolate + 5-amino-1-(5-phospho-beta-D-ribosyl)imidazole-4-carboxamide = 5-formamido-1-(5-phospho-D-ribosyl)imidazole-4-carboxamide + (6S)-5,6,7,8-tetrahydrofolate. It carries out the reaction IMP + H2O = 5-formamido-1-(5-phospho-D-ribosyl)imidazole-4-carboxamide. It functions in the pathway purine metabolism; IMP biosynthesis via de novo pathway; 5-formamido-1-(5-phospho-D-ribosyl)imidazole-4-carboxamide from 5-amino-1-(5-phospho-D-ribosyl)imidazole-4-carboxamide (10-formyl THF route): step 1/1. The protein operates within purine metabolism; IMP biosynthesis via de novo pathway; IMP from 5-formamido-1-(5-phospho-D-ribosyl)imidazole-4-carboxamide: step 1/1. The sequence is that of Bifunctional purine biosynthesis protein PurH from Synechococcus elongatus (strain ATCC 33912 / PCC 7942 / FACHB-805) (Anacystis nidulans R2).